A 990-amino-acid polypeptide reads, in one-letter code: Presequence protease, mitochondrial (990 aa).

A mitochondrion-targeting transit peptide spans 1–25; the sequence is MLRLKSLKKPVQAVVRRFATTSAPT. His-89 is a Zn(2+) binding site. The active-site Proton acceptor is the Glu-92. His-93 serves as a coordination point for Zn(2+). Residue Glu-165 is part of the active site. Residue Glu-190 participates in Zn(2+) binding.

It belongs to the peptidase M16 family. PreP subfamily. Monomer and homodimer; homodimerization is induced by binding of the substrate. Requires Zn(2+) as cofactor.

It is found in the mitochondrion intermembrane space. The protein resides in the mitochondrion matrix. In terms of biological role, degrades mitochondrial transit peptides after their cleavage in the intermembrane space or in the matrix, and presequence peptides; clearance of these peptides is required to keep the presequence processing machinery running. Preferentially cleaves the N-terminal side of paired basic amino acid residues. Also degrades other unstructured peptides. May function as an ATP-dependent peptidase as opposed to a metalloendopeptidase. This Yarrowia lipolytica (strain CLIB 122 / E 150) (Yeast) protein is Presequence protease, mitochondrial (CYM1).